The chain runs to 131 residues: Interleukin-13 (131 aa).

An N-terminal signal peptide occupies residues 1–18; sequence MALWLTVVIALTCLGGLA. 4 N-linked (GlcNAc...) asparagine glycosylation sites follow: N38, N48, N56, and N71. Intrachain disulfides connect C47–C75 and C63–C89.

It belongs to the IL-4/IL-13 family. In terms of assembly, interacts with IL13RA2.

The protein localises to the secreted. Its function is as follows. Cytokine that plays important roles in allergic inflammation and immune response to parasite infection. Synergizes with IL2 in regulating interferon-gamma synthesis. Stimulates B-cell proliferation, and activation of eosinophils, basophils, and mast cells. Plays an important role in controlling IL33 activity by modulating the production of transmembrane and soluble forms of interleukin-1 receptor-like 1/IL1RL1. Displays the capacity to antagonize Th1-driven proinflammatory immune response and downregulates synthesis of many proinflammatory cytokines including IL1, IL6, IL10, IL12 and TNF-alpha through a mechanism that partially involves suppression of NF-kappa-B. Also functions on nonhematopoietic cells, including endothelial cells where it induces vascular cell adhesion protein 1/VCAM1, which is important in the recruitment of eosinophils. Exerts its biological effects through its receptors which comprises the IL4R chain and the IL13RA1 chain, to activate JAK1 and TYK2, leading to the activation of STAT6. Aside from IL13RA1, another receptor IL13RA2 acts as a high affinity decoy for IL13 and mediates internalization and depletion of extracellular IL13. This Canis lupus familiaris (Dog) protein is Interleukin-13 (IL13).